The primary structure comprises 337 residues: Exopolysaccharide phosphotransferase cps2G (337 aa).

This sequence belongs to the stealth family.

This chain is Exopolysaccharide phosphotransferase cps2G (cps2G), found in Lactiplantibacillus plantarum (strain ATCC BAA-793 / NCIMB 8826 / WCFS1) (Lactobacillus plantarum).